We begin with the raw amino-acid sequence, 438 residues long: Na(+)/H(+) antiporter NhaA (438 aa).

11 helical membrane-spanning segments follow: residues 23 to 43 (FGGI…NSFV), 62 to 82 (FFIG…LFFL), 104 to 124 (SFPV…YFFL), 133 to 153 (GFGI…MLLG), 162 to 182 (VFLI…IALF), 185 to 205 (TNLK…LALL), 212 to 232 (SLIP…QSGI), 302 to 322 (FLAP…NAGV), 337 to 357 (LGVI…ITFI), 372 to 392 (WWHI…SMFI), and 410 to 430 (IAIL…LFLL).

It belongs to the NhaA Na(+)/H(+) (TC 2.A.33) antiporter family.

The protein localises to the cell inner membrane. It catalyses the reaction Na(+)(in) + 2 H(+)(out) = Na(+)(out) + 2 H(+)(in). Its function is as follows. Na(+)/H(+) antiporter that extrudes sodium in exchange for external protons. The polypeptide is Na(+)/H(+) antiporter NhaA (Helicobacter acinonychis (strain Sheeba)).